A 530-amino-acid polypeptide reads, in one-letter code: Tegument protein UL21 homolog (530 aa).

Belongs to the alphaherpesvirinae UL21 protein family. As to quaternary structure, interacts (via C-terminus) with UL16.

The protein resides in the virion tegument. The protein localises to the host cytoplasm. Its subcellular location is the host nucleus. Functionally, may participate in DNA packaging/capsid maturation events. Promotes efficient incorporation of tegument proteins UL46, UL49, and US3 homologs into virions. May also play a role in capsid transport to the trans-Golgi network (TGN). The polypeptide is Tegument protein UL21 homolog (Equus caballus (Horse)).